Here is a 447-residue protein sequence, read N- to C-terminus: Signal recognition particle 54 kDa protein (447 aa).

GTP-binding positions include 103–110 (GVQGSGKT), 185–189 (DTAGR), and 245–248 (TKMD).

The protein belongs to the GTP-binding SRP family. SRP54 subfamily. Part of the signal recognition particle protein translocation system, which is composed of SRP and FtsY. Archaeal SRP consists of a 7S RNA molecule of 300 nucleotides and two protein subunits: SRP54 and SRP19.

The protein resides in the cytoplasm. The enzyme catalyses GTP + H2O = GDP + phosphate + H(+). In terms of biological role, involved in targeting and insertion of nascent membrane proteins into the cytoplasmic membrane. Binds to the hydrophobic signal sequence of the ribosome-nascent chain (RNC) as it emerges from the ribosomes. The SRP-RNC complex is then targeted to the cytoplasmic membrane where it interacts with the SRP receptor FtsY. The polypeptide is Signal recognition particle 54 kDa protein (Saccharolobus islandicus (strain M.16.27) (Sulfolobus islandicus)).